The sequence spans 207 residues: Ras-related protein Rab-7a (207 aa).

T2 is subject to N-acetylthreonine. Positions 17, 18, 19, 20, 21, 22, 23, 34, 35, 37, and 40 each coordinate GTP. T22 serves as a coordination point for Mg(2+). The Switch 1 signature appears at Y28 to I41. Mg(2+) is bound by residues T40 and D63. G66 serves as a coordination point for GTP. The Switch 2 motif lies at Q67–D82. S72 carries the phosphoserine modification. GTP-binding residues include N125, K126, D128, A156, and K157. Residues K191 and K194 each participate in a glycyl lysine isopeptide (Lys-Gly) (interchain with G-Cter in ubiquitin) cross-link. 2 S-geranylgeranyl cysteine lipidation sites follow: C205 and C207. At C207 the chain carries Cysteine methyl ester.

Belongs to the small GTPase superfamily. Rab family. Interacts with NTRK1/TRKA. Interacts with RILP. Interacts with PSMA7. Interacts with RNF115. Interacts with FYCO1. Interacts with the PIK3C3/VPS34-PIK3R4 complex. The GTP-bound form interacts with OSBPL1A. The GTP-bound form interacts with RAC1. Interacts with CLN3. Interacts with CHM, the substrate-binding subunit of the Rab geranylgeranyltransferase complex. Interacts with C9orf72. Does not interact with HPS4 and the BLOC-3 complex (heterodimer of HPS1 and HPS4). Interacts with CLN5. Interacts with PLEKHM1 (via N- and C-terminus). Interacts with PRPH; the interaction is direct. Interacts with VPS13A. The GDP-bound form interacts with RIMOC1. Interacts with the MON1A-CCZ1B complex and this interaction is enhanced in the presence of RIMOC1. Interacts with VPS39 and VPS41. Forms a ternary complex with LAMP2 and RUFY4; the interaction with LAMP2 is mediated by RUFY4 (via RUN and coiled coil domains). Mg(2+) is required as a cofactor. Deubiquitination at Lys-191 and Lys-194 by USP32. In terms of processing, phosphorylated at Ser-72 by LRRK1; phosphorylation is dependent on protein kinase C (PKC) activation of LRRK1. Post-translationally, prenylated. Prenylation is required for association with cellular membranes.

It is found in the cytoplasmic vesicle. Its subcellular location is the phagosome membrane. The protein localises to the late endosome membrane. The protein resides in the lysosome membrane. It localises to the melanosome membrane. It is found in the autophagosome membrane. Its subcellular location is the lipid droplet. The protein localises to the endosome membrane. The protein resides in the mitochondrion membrane. It catalyses the reaction GTP + H2O = GDP + phosphate + H(+). Regulated by guanine nucleotide exchange factors (GEFs) which promote the exchange of bound GDP for free GTP. Regulated by GTPase activating proteins (GAPs) which increase the GTP hydrolysis activity. Inhibited by GDP dissociation inhibitors (GDIs). Its function is as follows. The small GTPases Rab are key regulators of intracellular membrane trafficking, from the formation of transport vesicles to their fusion with membranes. Rabs cycle between an inactive GDP-bound form and an active GTP-bound form that is able to recruit to membranes different sets of downstream effectors directly responsible for vesicle formation, movement, tethering and fusion. In its active state, RAB7A binds to a variety of effector proteins playing a key role in the regulation of endo-lysosomal trafficking. Governs early-to-late endosomal maturation, microtubule minus-end as well as plus-end directed endosomal migration and positioning, and endosome-lysosome transport through different protein-protein interaction cascades. Also plays a central role in growth-factor-mediated cell signaling, nutrient-transporter-mediated nutrient uptake, neurotrophin transport in the axons of neurons and lipid metabolism. Also involved in regulation of some specialized endosomal membrane trafficking, such as maturation of melanosomes, pathogen-induced phagosomes (or vacuoles) and autophagosomes. Plays a role in the maturation and acidification of phagosomes that engulf pathogens, such as S.aureus and Mycobacteria. Plays a role in the fusion of phagosomes with lysosomes. In concert with RAC1, plays a role in regulating the formation of RBs (ruffled borders) in osteoclasts. Controls the endosomal trafficking and neurite outgrowth signaling of NTRK1/TRKA. Regulates the endocytic trafficking of the EGF-EGFR complex by regulating its lysosomal degradation. Involved in the ADRB2-stimulated lipolysis through lipophagy, a cytosolic lipase-independent autophagic pathway. Required for the exosomal release of SDCBP, CD63 and syndecan. Required for vesicular trafficking and cell surface expression of ACE2. May play a role in PRPH neuronal intermediate filament assembly. This is Ras-related protein Rab-7a (RAB7A) from Pongo abelii (Sumatran orangutan).